The following is a 221-amino-acid chain: Mediator of RNA polymerase II transcription subunit 19a (221 aa).

The tract at residues 101-221 (PVELPPAEKG…DEVGAIRVAG (121 aa)) is disordered. Over residues 142-152 (EHKKHKHKHKD) the composition is skewed to basic residues. Over residues 153–178 (RSKDKDKDKDRDRKKDKNGHHDSGDH) the composition is skewed to basic and acidic residues. The span at 179–188 (SKKHHDKKRK) shows a compositional bias: basic residues.

Belongs to the plant Mediator complex subunit 19 family. In terms of assembly, component of the Mediator complex. Interacts with FIB2.

It is found in the nucleus. Its function is as follows. Component of the Mediator complex, a coactivator involved in the regulated transcription of nearly all RNA polymerase II-dependent genes. Mediator functions as a bridge to convey information from gene-specific regulatory proteins to the basal RNA polymerase II transcription machinery. The Mediator complex, having a compact conformation in its free form, is recruited to promoters by direct interactions with regulatory proteins and serves for the assembly of a functional preinitiation complex with RNA polymerase II and the general transcription factors. This chain is Mediator of RNA polymerase II transcription subunit 19a (MED19A), found in Arabidopsis thaliana (Mouse-ear cress).